Here is a 457-residue protein sequence, read N- to C-terminus: Phosphoglucosamine mutase (457 aa).

Catalysis depends on Ser105, which acts as the Phosphoserine intermediate. Mg(2+) is bound by residues Ser105, Asp247, Asp249, and Asp251. Ser105 is modified (phosphoserine).

The protein belongs to the phosphohexose mutase family. Mg(2+) serves as cofactor. In terms of processing, activated by phosphorylation.

The enzyme catalyses alpha-D-glucosamine 1-phosphate = D-glucosamine 6-phosphate. Functionally, catalyzes the conversion of glucosamine-6-phosphate to glucosamine-1-phosphate. In Protochlamydia amoebophila (strain UWE25), this protein is Phosphoglucosamine mutase.